Reading from the N-terminus, the 417-residue chain is uncharacterized protein (417 aa).

A disordered region spans residues Met-1 to Pro-24. A run of 4 helical transmembrane segments spans residues Val-54–Ala-74, Leu-79–Ile-99, Ala-117–Val-137, and Met-143–Met-163. A compositionally biased stretch (basic and acidic residues) spans Asp-211–Asp-228. Disordered regions lie at residues Asp-211–Asp-283 and Ile-308–Lys-417. A compositionally biased stretch (polar residues) spans Ser-312–Thr-322. Positions Glu-336–Arg-347 are enriched in low complexity. Positions Ser-391–Phe-401 are enriched in polar residues.

It belongs to the chlamydial CPn_0443/CT_005/TC_0273 family.

It is found in the cell membrane. This is an uncharacterized protein from Chlamydia pneumoniae (Chlamydophila pneumoniae).